The primary structure comprises 279 residues: Shikimate dehydrogenase (NADP(+)) (279 aa).

Shikimate is bound by residues 20–22 and threonine 67; that span reads SRS. The Proton acceptor role is filled by lysine 71. Aspartate 83 serves as a coordination point for NADP(+). Residues asparagine 92 and aspartate 108 each contribute to the shikimate site. NADP(+)-binding positions include 134–138 and leucine 223; that span reads GAGGA. Tyrosine 225 serves as a coordination point for shikimate. Glycine 246 contributes to the NADP(+) binding site.

This sequence belongs to the shikimate dehydrogenase family. In terms of assembly, homodimer.

The enzyme catalyses shikimate + NADP(+) = 3-dehydroshikimate + NADPH + H(+). It functions in the pathway metabolic intermediate biosynthesis; chorismate biosynthesis; chorismate from D-erythrose 4-phosphate and phosphoenolpyruvate: step 4/7. In terms of biological role, involved in the biosynthesis of the chorismate, which leads to the biosynthesis of aromatic amino acids. Catalyzes the reversible NADPH linked reduction of 3-dehydroshikimate (DHSA) to yield shikimate (SA). This chain is Shikimate dehydrogenase (NADP(+)), found in Cereibacter sphaeroides (strain KD131 / KCTC 12085) (Rhodobacter sphaeroides).